A 106-amino-acid polypeptide reads, in one-letter code: ATP-dependent Clp protease adapter protein ClpS (106 aa).

This sequence belongs to the ClpS family. Binds to the N-terminal domain of the chaperone ClpA.

Functionally, involved in the modulation of the specificity of the ClpAP-mediated ATP-dependent protein degradation. In Salmonella arizonae (strain ATCC BAA-731 / CDC346-86 / RSK2980), this protein is ATP-dependent Clp protease adapter protein ClpS.